The chain runs to 172 residues: Putative phosphoesterase BT9727_1129 (172 aa).

The active-site Proton donor is the His-34. Short sequence motifs (HXTX) lie at residues His-34–Leu-37 and His-115–Ile-118. The Proton acceptor role is filled by His-115.

It belongs to the 2H phosphoesterase superfamily. YjcG family.

This Bacillus thuringiensis subsp. konkukian (strain 97-27) protein is Putative phosphoesterase BT9727_1129.